The sequence spans 734 residues: Terpene cyclase/mutase ntnI (734 aa).

The segment covering 1–12 has biased composition (polar residues); that stretch reads MQSHIGQWTSTA. A disordered region spans residues 1–26; the sequence is MQSHIGQWTSTAKGHLSRDENGDEKT. Residues 16–26 are compositionally biased toward basic and acidic residues; that stretch reads LSRDENGDEKT. 4 PFTB repeats span residues 130 to 172, 493 to 534, 570 to 610, and 619 to 668; these read AIEI…RLLG, LHNA…SGKT, RTRG…ALAG, and SRKG…GLMH.

It belongs to the terpene cyclase/mutase family.

It participates in secondary metabolite biosynthesis; terpenoid biosynthesis. Its function is as follows. Terpene cyclase/mutase; part of the gene cluster that mediates the biosynthesis of the meroterpenoids nectripenoids A and B, as well as cochliquninone D and isocochliquninone E. The pathway probably begins with the HR-PKS ntnH that catalyzes two chain-extension steps to form a reduced triketide, which then primes the SAT domain in the NR-PKS ntnG to initiate three more cycles of extension to give a linear hexaketide corresponding to the polyketide part of nectripenoids. The FAD-dependent monooxygenase ntnJ then performs an oxidative decarboxylation at C11 of the ntnH/ntnG product, via an electrophilic aromatic hydroxylation with concomitant ipso-decarboxylation. The membrane-bound polyprenyl transferase ntnF then introduces a farnesyl group before the FAD-dependent monooxygenase ntnK functions as the first epoxidase on terminal C12'-C13' olefin, followed by a second epoxidation on C7'-C8' catalyzed by ntnA. The terpene cyclase/mutase ntnI then initiates the sequential tricyclic ring formation through protonation of the terminal epoxide and catalyzes the regioselective and stereoselective 6/6/6-tricyclic ring formation. The cytochrome P450 monooxygenase ntnM may then hydroxylate C1'. This chain is Terpene cyclase/mutase ntnI, found in Nectria sp.